Consider the following 742-residue polypeptide: Protein-associating with the carboxyl-terminal domain of ezrin (742 aa).

A lipid anchor (N-myristoyl glycine) is attached at glycine 2. The region spanning 2–245 is the Protein kinase domain; the sequence is GSENSALKSY…LCTLLSHDFF (244 aa). HEAT repeat units lie at residues 199–238, 285–323, 333–370, and 372–409; these read ESLL…ALCT, LIAS…HAQG, LFQS…HFTQ, and QLKK…LLGP. Serine 439 carries the phosphoserine modification. Disordered regions lie at residues 506–544, 568–598, and 629–652; these read LSDV…QTVN, SSWD…TSGE, and GDDA…VPSE. Residues 529–539 show a composition bias toward acidic residues; sequence WPDWSEPEEPE. The interaction with EZR stretch occupies residues 548–742; that stretch reads WPREPCDDVK…GELNWEDNNW (195 aa). Position 707 is a phosphoserine (serine 707). Residues 723 to 742 form a disordered region; it reads EGEAEGWEEEGELNWEDNNW.

The protein belongs to the protein kinase superfamily. In terms of assembly, interacts with EZR/VIL2 C-terminal domain. May be myristoylated; myristoylation may target it to Golgi compartment. Post-translationally, phosphorylated. In terms of tissue distribution, ubiquitously expressed.

It is found in the cytoplasm. It localises to the golgi apparatus. The protein resides in the cell projection. Its subcellular location is the lamellipodium. In terms of biological role, may play a role in regulating cell adhesion/migration complexes in migrating cells. In Homo sapiens (Human), this protein is Protein-associating with the carboxyl-terminal domain of ezrin (SCYL3).